We begin with the raw amino-acid sequence, 384 residues long: GDSL esterase/lipase At1g71691 (384 aa).

An N-terminal signal peptide occupies residues 1-27 (MAFHFRRLCFFSALLAVVLQLLHGVSG). Catalysis depends on Ser-62, which acts as the Nucleophile. Active-site residues include Asp-348 and His-351.

This sequence belongs to the 'GDSL' lipolytic enzyme family.

The protein localises to the secreted. This is GDSL esterase/lipase At1g71691 from Arabidopsis thaliana (Mouse-ear cress).